Consider the following 20-residue polypeptide: Antiviral protein Y3 (20 aa).

The chain is Antiviral protein Y3 from Pleurotus citrinopileatus (Golden oyster mushroom).